A 162-amino-acid chain; its full sequence is MENTEVKVGIADLNLVSSPNKIMTIGLGSCIGIALYDRRSKLAGLSHIMLPDSTQFKNVTNPMKFADLAIPLLIKKMEAKGCQKRNLIAKIAGGASMFSFSDKSMVGDIGKRNIQAVKKSLSEERIQIIAEDVGGNKGRTMILDALDGKVTLKIVGIGIVEL.

Belongs to the CheD family.

It catalyses the reaction L-glutaminyl-[protein] + H2O = L-glutamyl-[protein] + NH4(+). In terms of biological role, probably deamidates glutamine residues to glutamate on methyl-accepting chemotaxis receptors (MCPs), playing an important role in chemotaxis. This Clostridium botulinum (strain Eklund 17B / Type B) protein is Probable chemoreceptor glutamine deamidase CheD.